An 89-amino-acid chain; its full sequence is Small ribosomal subunit protein uS14 (89 aa).

It belongs to the universal ribosomal protein uS14 family. In terms of assembly, part of the 30S ribosomal subunit. Contacts proteins S3 and S10.

Its function is as follows. Binds 16S rRNA, required for the assembly of 30S particles and may also be responsible for determining the conformation of the 16S rRNA at the A site. The chain is Small ribosomal subunit protein uS14 from Azobacteroides pseudotrichonymphae genomovar. CFP2.